The sequence spans 71 residues: Ranatuerin-2P (71 aa).

The first 20 residues, 1 to 20, serve as a signal peptide directing secretion; it reads MFTMKKSLLLFFFLGTISLS. Positions 21 to 44 are excised as a propeptide; sequence LCEQERGADEDDGVEITEEEVKRG. A disulfide bridge connects residues Cys66 and Cys71.

As to expression, expressed by the skin glands.

It localises to the secreted. Its function is as follows. Antibacterial activity against Gram-positive bacterium S.aureus and Gram-negative bacterium E.coli. Has activity against C.albicans. This is Ranatuerin-2P from Lithobates pipiens (Northern leopard frog).